The primary structure comprises 859 residues: Protein argonaute-2 (859 aa).

The disordered stretch occupies residues 1–27 (MYSGAGPALAPPAPPPPIQGYAFKPPP). Y2 carries the 3'-nitrotyrosine modification. Pro residues predominate over residues 9-27 (LAPPAPPPPIQGYAFKPPP). Residues 229-348 (PVIEFVCEVL…LPLEVCNIVA (120 aa)) form the PAZ domain. The interval 311-316 (YFKDRH) is interaction with guide RNA. Phosphoserine is present on S387. Residues 517–818 (LVVVILPGKT…VAFRARYHLV (302 aa)) form the Piwi domain. Residues 524–566 (GKTPVYAEVKRVGDTVLGMATQCVQMKNVQRTTPQTLSNLCLK) are interaction with guide RNA. The tract at residues 587–590 (FQQP) is interaction with GW182 family members. Residue D597 coordinates a divalent metal cation. Positions 650–660 (LIQFYKSTRFK) are interaction with GW182 family members. D669 is an a divalent metal cation binding site. P700 bears the 4-hydroxyproline mark. Interaction with guide RNA stretches follow at residues 709-710 (KR), 753-761 (HAGIQGTSR), and 790-812 (YVRC…VAFR). H807 contributes to the a divalent metal cation binding site. 4 positions are modified to phosphoserine: S824, S828, S831, and S834.

The protein belongs to the argonaute family. Ago subfamily. In terms of assembly, interacts with DICER1 through its Piwi domain and with TARBP2 during assembly of the RNA-induced silencing complex (RISC). Together, DICER1, AGO2 and TARBP2 constitute the trimeric RISC loading complex (RLC), or micro-RNA (miRNA) loading complex (miRLC). Within the RLC/miRLC, DICER1 and TARBP2 are required to process precursor miRNAs (pre-miRNAs) to mature miRNAs and then load them onto AGO2. AGO2 bound to the mature miRNA constitutes the minimal RISC and may subsequently dissociate from DICER1 and TARBP2. Note however that the term RISC has also been used to describe the trimeric RLC/miRLC. The formation of RISC complexes containing siRNAs rather than miRNAs appears to occur independently of DICER1. Interacts with AGO1. Also interacts with DDB1, DDX5, DDX6, DDX20, DHX30, DHX36, DDX47, DHX9, ELAVL, FXR1, GEMIN4, HNRNPF, IGF2BP1, ILF3, IMP8, MATR3, PABPC1, PRMT5, P4HA1, P4HB, RBM4, SART3, TNRC6A, TNRC6B, UPF1 and YBX1. Interacts with the P-body components DCP1A and XRN1. Associates with polysomes and messenger ribonucleoproteins (mNRPs). Interacts with RBM4; the interaction is modulated under stress-induced conditions, occurs under both cell proliferation and differentiation conditions and in an RNA- and phosphorylation-independent manner. Interacts with LIMD1, WTIP and AJUBA. Interacts with TRIM71; the interaction increases in presence of RNA. Interacts with APOBEC3G in an RNA-dependent manner. Interacts with APOBEC3A, APOBEC3C, APOBEC3F and APOBEC3H. Interacts with DICER1, TARBP2, EIF6, MOV10 and RPL7A (60S ribosome subunit); they form a large RNA-induced silencing complex (RISC). Interacts with FMR1. Interacts with ZFP36. Found in a complex, composed of AGO2, CHD7 and ARB2A. Interacts with RC3H1; the interaction is RNA independent. Interacts with SND1. Interacts with SYT11. Interacts with CLNK. Interacts with GARRE1. Interacts with GRB2; this interaction is important for the formation of a ternary complex containing GRB2, AGO2 and DICER1. As to quaternary structure, (Microbial infection) Interacts with Epstein-Barr virus (EBV) tegument protein BGLF2; this interaction participates in the regulation of cellular miRNA by the virus, leading to enhanced SUMOylation. (Microbial infection) Interacts with rotavirus A non-structural protein 5; this interaction probably plays a role in the sequestration of AGO2 in viral factories. In terms of assembly, (Microbial infection) Interacts with human herpesvirus 8 protein MTA/ORF57; this interaction inhibits P-body formation. The cofactor is Mg(2+). Mn(2+) serves as cofactor. In terms of processing, hydroxylated. 4-hydroxylation appears to enhance protein stability but is not required for miRNA-binding or endonuclease activity. Post-translationally, ubiquitinated on surface-exposed lysines by a SCF-like E3 ubiquitin-protein ligase complex containing ZSWIM8 during target-directed microRNA degradation (TDMD), a process that mediates degradation of microRNAs (miRNAs). Ubiquitination by the SCF-like E3 ubiquitin-protein ligase complex containing ZSWIM8 leads to its subsequent degradation, thereby exposing miRNAs for degradation. ZSWIM8 recognizes and binds AGO2 when it is engaged with a TDMD target. Phosphorylated. A phosphorylation cycle of C-terminal serine cluster (Ser-824-Ser-834) regulates the release of target mRNAs. Target-binding leads to phosphorylation of these residues by CSNK1A1, which reduces the affinity of AGO2 for mRNA and enables target release. The ANKRD52-PPP6C phosphatase complex dephosphorylates the residues, which primes AGO2 for binding a new target. In terms of processing, phosphorylation at Ser-387 by AKT3; leads to up-regulate translational repression of microRNA target and down-regulate endonucleolytic cleavage.

It is found in the cytoplasm. The protein resides in the P-body. The protein localises to the nucleus. The enzyme catalyses Endonucleolytic cleavage to 5'-phosphomonoester.. Inhibited by EDTA. In terms of biological role, required for RNA-mediated gene silencing (RNAi) by the RNA-induced silencing complex (RISC). The 'minimal RISC' appears to include AGO2 bound to a short guide RNA such as a microRNA (miRNA) or short interfering RNA (siRNA). These guide RNAs direct RISC to complementary mRNAs that are targets for RISC-mediated gene silencing. The precise mechanism of gene silencing depends on the degree of complementarity between the miRNA or siRNA and its target. Binding of RISC to a perfectly complementary mRNA generally results in silencing due to endonucleolytic cleavage of the mRNA specifically by AGO2. Binding of RISC to a partially complementary mRNA results in silencing through inhibition of translation, and this is independent of endonuclease activity. May inhibit translation initiation by binding to the 7-methylguanosine cap, thereby preventing the recruitment of the translation initiation factor eIF4-E. May also inhibit translation initiation via interaction with EIF6, which itself binds to the 60S ribosomal subunit and prevents its association with the 40S ribosomal subunit. The inhibition of translational initiation leads to the accumulation of the affected mRNA in cytoplasmic processing bodies (P-bodies), where mRNA degradation may subsequently occur. In some cases RISC-mediated translational repression is also observed for miRNAs that perfectly match the 3' untranslated region (3'-UTR). Can also up-regulate the translation of specific mRNAs under certain growth conditions. Binds to the AU element of the 3'-UTR of the TNF (TNF-alpha) mRNA and up-regulates translation under conditions of serum starvation. Also required for transcriptional gene silencing (TGS), in which short RNAs known as antigene RNAs or agRNAs direct the transcriptional repression of complementary promoter regions. Its function is as follows. (Microbial infection) Upon Sars-CoV-2 infection, associates with viral miRNA-like small RNA, CoV2-miR-O7a, and may repress mRNAs, such as BATF2, to evade the IFN response. In Homo sapiens (Human), this protein is Protein argonaute-2.